We begin with the raw amino-acid sequence, 162 residues long: Interleukin-15 (162 aa).

An N-terminal signal peptide occupies residues 1-29 (MRILKPYLRSTSIQCYLCLLLNSHFLTEA). A propeptide spanning residues 30-48 (CIPVFILSCINAGLPKTEA) is cleaved from the precursor. Cystine bridges form between Cys83–Cys133 and Cys90–Cys136. N-linked (GlcNAc...) asparagine glycans are attached at residues Asn104 and Asn127.

It belongs to the IL-15/IL-21 family.

Its subcellular location is the secreted. Cytokine that plays a major role in the development of inflammatory and protective immune responses to microbial invaders and parasites by modulating immune cells of both the innate and adaptive immune systems. Stimulates the proliferation of natural killer cells, T-cells and B-cells and promotes the secretion of several cytokines. In monocytes, induces the production of IL8 and monocyte chemotactic protein 1/CCL2, two chemokines that attract neutrophils and monocytes respectively to sites of infection. Unlike most cytokines, which are secreted in soluble form, IL15 is expressed in association with its high affinity IL15RA on the surface of IL15-producing cells and delivers signals to target cells that express IL2RB and IL2RG receptor subunits. Binding to its receptor triggers the phosphorylation of JAK1 and JAK3 and the recruitment and subsequent phosphorylation of signal transducer and activator of transcription-3/STAT3 and STAT5. In mast cells, induces the rapid tyrosine phosphorylation of STAT6 and thereby controls mast cell survival and release of cytokines such as IL4. This chain is Interleukin-15 (IL15), found in Felis catus (Cat).